The primary structure comprises 987 residues: MVSKSDQLLIVVSILEGRHFPKRPKHMLIVEAKFDGEQLATDPVDHTDQPEFATELAWEIDRKALHQHRLQRTPIKLQCFALDPSTSARETIGYIVLDLRTAQETKQAPKWYQLLSNKYTKFKSEIQISIALETDTKAPVDSFKAKGAPPRDGKVPASLSGLDPKDIVAVLNEEGGYHQIGPAGYCTDFFIMSVTIAFATQLEQLIPCTMKLPERQPEFFFYYSLLGNDVTNEPFSDLINPNFEPERASVRIRSSIEILRVYLTLHSKLQIHLCCGDQSLGSTEIPLTGLLKKGSTEINHRPVTVEGAFTLDPPNRAKQKLAPIPVELAPTVGVSVALQREGMDVQSLIELKTQNEHEPHHSKKRVLTPIKENTHTGPQSPSESPVPPHNQSPPTKDDATESEVESLLYDKDTKLNPKAISSSVPALLAKPVTTSIASEAASGQKIAVPATSHHFCFSIDLRSIHDLEVGFPINCILRYSYPFFGSAAPIMTNPPVEVRKNMEVFLPQSYCAFDFATLPHQLQDTFLRIPLLVELWHKDKMSKDLLLGIARIQLSNILSSEKTRFLGSNGEQCWRQTFSESVPIVATQGSNNRIVDLSYTVTLEDYGLVKMREIFVSDSSQGLSAVQQKPSSVPPAPCPSEIQTEPRETLEYKAALELEMWKEMQEDIFENQLKQKELAHMQALAEEWKKRDRERESLVKKKVAEYNILEGKLQKTLIDLEKREQQLAIAESELQRERRELKSERERNLQELQDSIRRAKEDCVHQVELERLKMKQLEEDKHRLQQQLNDAENKYKTLEKEFHQFKDQQSSKPEIRLQSEINLLTLEKVELERKLESATKSKLHYKQQWGRALKELARLKQREQESQMARLKKQQEELEQMRLRYLAAEEKDTVKTERQELLDIRNELNRLRQQEQKQYPDSREIASGKMDGPHGSALEEGLDDYLTRLIEERDTLMRTGVYNHEDRIISELDRQIREVLAKNNASN.

The C2 1 domain maps to 1–112; sequence MVSKSDQLLI…QETKQAPKWY (112 aa). Residues 352 to 408 are disordered; that stretch reads KTQNEHEPHHSKKRVLTPIKENTHTGPQSPSESPVPPHNQSPPTKDDATESEVESLL. Residues 438 to 567 form the C2 2 domain; that stretch reads SEAASGQKIA…LSSEKTRFLG (130 aa). Positions 670 to 919 form a coiled coil; that stretch reads ENQLKQKELA…RLRQQEQKQY (250 aa). The span at 912-926 shows a compositional bias: basic and acidic residues; sequence RQQEQKQYPDSREIA. The disordered stretch occupies residues 912-937; that stretch reads RQQEQKQYPDSREIASGKMDGPHGSA. Phosphoserine is present on serine 936.

The protein belongs to the CEP120 family. Interacts with TACC2 and TACC3. Interacts with CCDC52.

It localises to the cytoplasm. The protein localises to the cytoskeleton. Its subcellular location is the microtubule organizing center. The protein resides in the centrosome. Plays a role in the microtubule-dependent coupling of the nucleus and the centrosome. Involved in the processes that regulate centrosome-mediated interkinetic nuclear migration (INM) of neural progenitors and for proper positioning of neurons during brain development. Also implicated in the migration and selfrenewal of neural progenitors. May play a role in centriole duplication during mitosis. Required for the recruitment of CEP295 to the proximal end of new-born centrioles at the centriolar microtubule wall during early S phase in a PLK4-dependent manner. The polypeptide is Centrosomal protein of 120 kDa (CEP120) (Bos taurus (Bovine)).